We begin with the raw amino-acid sequence, 427 residues long: Glutamate-1-semialdehyde 2,1-aminomutase (427 aa).

Lysine 268 is modified (N6-(pyridoxal phosphate)lysine).

Belongs to the class-III pyridoxal-phosphate-dependent aminotransferase family. HemL subfamily. It depends on pyridoxal 5'-phosphate as a cofactor.

The protein localises to the cytoplasm. It carries out the reaction (S)-4-amino-5-oxopentanoate = 5-aminolevulinate. Its pathway is porphyrin-containing compound metabolism; protoporphyrin-IX biosynthesis; 5-aminolevulinate from L-glutamyl-tRNA(Glu): step 2/2. The polypeptide is Glutamate-1-semialdehyde 2,1-aminomutase (Methanococcus maripaludis (strain DSM 14266 / JCM 13030 / NBRC 101832 / S2 / LL)).